Reading from the N-terminus, the 221-residue chain is GFP-like non-fluorescent chromoprotein (221 aa).

Positions 62–64 form a cross-link, 2-iminomethyl-5-imidazolinone (Gln-Gly); sequence QYG. The residue at position 63 (tyrosine 63) is a 2,3-didehydrotyrosine.

It belongs to the GFP family. Homotetramer. Post-translationally, contains a chromophore consisting of modified amino acid residues. The chromophore is formed by autocatalytic backbone condensation between Xaa-N and Gly-(N+2), oxidation of Tyr-(N+1) to didehydrotyrosine, and formation of a double bond to the alpha-amino nitrogen of residue Xaa-N. Maturation of the chromophore requires nothing other than molecular oxygen. The precise stereochemistry of the tyrosine has not been determined.

Non-fluorescent pigment protein that is lilac in color. This is GFP-like non-fluorescent chromoprotein from Goniopora tenuidens (Anemone coral).